A 402-amino-acid polypeptide reads, in one-letter code: Pyridinium-3,5-bisthiocarboxylic acid mononucleotide nickel insertion protein (402 aa).

It belongs to the LarC family.

It carries out the reaction Ni(II)-pyridinium-3,5-bisthiocarboxylate mononucleotide = pyridinium-3,5-bisthiocarboxylate mononucleotide + Ni(2+). Its function is as follows. Involved in the biosynthesis of a nickel-pincer cofactor ((SCS)Ni(II) pincer complex). Binds Ni(2+), and functions in nickel delivery to pyridinium-3,5-bisthiocarboxylic acid mononucleotide (P2TMN), to form the mature cofactor. Is thus probably required for the activation of nickel-pincer cofactor-dependent enzymes. This chain is Pyridinium-3,5-bisthiocarboxylic acid mononucleotide nickel insertion protein, found in Thermotoga sp. (strain RQ2).